Here is a 433-residue protein sequence, read N- to C-terminus: AP-2 complex subunit mu (433 aa).

The region spanning 168–432 (RNELFLDVLE…IGRSGIYETR (265 aa)) is the MHD domain. 3 residues coordinate a 1,2-diacyl-sn-glycero-3-phospho-(1D-myo-inositol-3,4,5-trisphosphate): Lys339, Lys343, and Lys352.

Belongs to the adaptor complexes medium subunit family. As to quaternary structure, adaptor protein complex 2 (AP-2) is a heterotetramer composed of two large adaptins (alpha-type subunit and beta-type subunit), a medium adaptin (mu-type subunit) and a small adaptin (sigma-type subunit).

It is found in the cell membrane. It localises to the membrane. Its subcellular location is the coated pit. Functionally, component of the adaptor complexes which link clathrin to receptors in coated vesicles. Clathrin-associated protein complexes are believed to interact with the cytoplasmic tails of membrane proteins, leading to their selection and concentration. AP50 is a subunit of the plasma membrane adaptor. The complex binds polyphosphoinositide-containing lipids. The polypeptide is AP-2 complex subunit mu (AP2M1) (Gallus gallus (Chicken)).